A 218-amino-acid polypeptide reads, in one-letter code: Putative copper transporter crmD (218 aa).

2 consecutive transmembrane segments (helical) span residues tyrosine 37 to leucine 57 and methionine 176 to valine 196.

The protein belongs to the copper transporter (Ctr) (TC 1.A.56) family. SLC31A subfamily.

Its subcellular location is the membrane. The catalysed reaction is Cu(2+)(in) = Cu(2+)(out). In terms of biological role, putative copper transporter; part of the crm gene cluster that mediates the biosynthesis of a yet unidentified copper-responsive metabolite. Probably involved in the transport of copper, even if it does not act as a major copper transporter. In contrast to crmA, is not involved in the biosynthesis of fumivalines or fumicicolins. The polypeptide is Putative copper transporter crmD (Aspergillus fumigatus (strain ATCC MYA-4609 / CBS 101355 / FGSC A1100 / Af293) (Neosartorya fumigata)).